Consider the following 529-residue polypeptide: Bifunctional purine biosynthesis protein PurH (529 aa).

The MGS-like domain maps to 1–148 (MQQRRPVRRA…KNHKDVAIVV (148 aa)). K287 bears the N6-acetyllysine mark.

Belongs to the PurH family.

The catalysed reaction is (6R)-10-formyltetrahydrofolate + 5-amino-1-(5-phospho-beta-D-ribosyl)imidazole-4-carboxamide = 5-formamido-1-(5-phospho-D-ribosyl)imidazole-4-carboxamide + (6S)-5,6,7,8-tetrahydrofolate. It catalyses the reaction IMP + H2O = 5-formamido-1-(5-phospho-D-ribosyl)imidazole-4-carboxamide. The protein operates within purine metabolism; IMP biosynthesis via de novo pathway; 5-formamido-1-(5-phospho-D-ribosyl)imidazole-4-carboxamide from 5-amino-1-(5-phospho-D-ribosyl)imidazole-4-carboxamide (10-formyl THF route): step 1/1. It participates in purine metabolism; IMP biosynthesis via de novo pathway; IMP from 5-formamido-1-(5-phospho-D-ribosyl)imidazole-4-carboxamide: step 1/1. This Escherichia coli O45:K1 (strain S88 / ExPEC) protein is Bifunctional purine biosynthesis protein PurH.